The chain runs to 116 residues: Large ribosomal subunit protein uL18 (116 aa).

Belongs to the universal ribosomal protein uL18 family. In terms of assembly, part of the 50S ribosomal subunit; part of the 5S rRNA/L5/L18/L25 subcomplex. Contacts the 5S and 23S rRNAs.

Functionally, this is one of the proteins that bind and probably mediate the attachment of the 5S RNA into the large ribosomal subunit, where it forms part of the central protuberance. This chain is Large ribosomal subunit protein uL18, found in Shewanella sediminis (strain HAW-EB3).